The chain runs to 265 residues: 6-oxopurine nucleoside phosphorylase (265 aa).

Phosphate contacts are provided by residues Ser10, 49–50 (RH), and 82–83 (SA). Disulfide bonds link Cys136-Cys202 and Cys162-Cys190. Substrate is bound at residue Met187. Residue Thr188 participates in phosphate binding. 211–213 (NYA) contacts substrate. Cysteines 254 and 256 form a disulfide.

Belongs to the PNP/MTAP phosphorylase family. MTAP subfamily. As to quaternary structure, homohexamer. Dimer of a homotrimer.

It catalyses the reaction a purine D-ribonucleoside + phosphate = a purine nucleobase + alpha-D-ribose 1-phosphate. The enzyme catalyses guanosine + phosphate = alpha-D-ribose 1-phosphate + guanine. The catalysed reaction is inosine + phosphate = alpha-D-ribose 1-phosphate + hypoxanthine. The protein operates within purine metabolism; purine nucleoside salvage. In terms of biological role, purine nucleoside phosphorylase which is highly specific for 6-oxopurine nucleosides. Cleaves guanosine or inosine to respective bases and sugar-1-phosphate molecules. Involved in purine salvage. The sequence is that of 6-oxopurine nucleoside phosphorylase from Pyrococcus furiosus (strain ATCC 43587 / DSM 3638 / JCM 8422 / Vc1).